We begin with the raw amino-acid sequence, 608 residues long: DNA mismatch repair protein MutL (608 aa).

This sequence belongs to the DNA mismatch repair MutL/HexB family.

Its function is as follows. This protein is involved in the repair of mismatches in DNA. It is required for dam-dependent methyl-directed DNA mismatch repair. May act as a 'molecular matchmaker', a protein that promotes the formation of a stable complex between two or more DNA-binding proteins in an ATP-dependent manner without itself being part of a final effector complex. The sequence is that of DNA mismatch repair protein MutL from Elusimicrobium minutum (strain Pei191).